We begin with the raw amino-acid sequence, 79 residues long: MQRCDPIRTRPIPPSRHTFIELQGYTDNCHLRAEKVCVPRRSMFVAKQSVTTDWAKVCASKVFFPCNAFRWSTTTALYQ.

Its subcellular location is the mitochondrion. This is an uncharacterized protein from Oenothera berteroana (Bertero's evening primrose).